We begin with the raw amino-acid sequence, 368 residues long: Alkaline phosphatase L (368 aa).

A signal peptide spans 1–23 (MFKRSLIAASLSVAALVSAQAMA).

Belongs to the PstS family. Homodimer.

It is found in the secreted. It localises to the periplasm. It catalyses the reaction a phosphate monoester + H2O = an alcohol + phosphate. Has both a phosphomonoesterase and phosphodiesterase activity. This chain is Alkaline phosphatase L, found in Pseudomonas aeruginosa (strain ATCC 15692 / DSM 22644 / CIP 104116 / JCM 14847 / LMG 12228 / 1C / PRS 101 / PAO1).